Reading from the N-terminus, the 202-residue chain is Recombination protein RecR (202 aa).

The C4-type zinc finger occupies 57 to 72 (CRDCRTFTEDDICAVC). The Toprim domain occupies 81 to 176 (GQICVVESPA…PATRIAHGVP (96 aa)).

This sequence belongs to the RecR family.

In terms of biological role, may play a role in DNA repair. It seems to be involved in an RecBC-independent recombinational process of DNA repair. It may act with RecF and RecO. This is Recombination protein RecR from Photobacterium profundum (strain SS9).